The chain runs to 892 residues: MMPIKSIVTLDQLEDSEYLFRIVSTVLPHLCLDYKVCDQLKTTFVHPFDVFLNNSLGSVTKQDELQAAISKLGINYLIDTTSRELKLFNVTLNAGNIDIINTPINISSETNPIINTHSFYDLPPFTQHLLNIRLTDTEYRARFIGGYIKPDGSDSMDVLAEKKYPDLNFDNTYLFNILYKDVINAPIKEFKAKIVNGVLSRQDFDNLIGVRQYITAQDQPRFDNTYAIADAARHYGVNLNTLPLPNVDLTTMPTYKHLIMYEQYFVDDYDRVPIYYNGNRVIFDDEIINFCISMRYQSLIPRLVEFFPDIPVNNNIVLHTRDPQNAAVNVTVGLPNMQFVDINRNNKFFINFFNLLAKEQRSTAIKVTKSMFWDGMDYEEYKSKNLQDMMFINSTCYVFGLYNHNNTTYCSILSDIISAEKTPIRVCLLPRVVGGKTVTDLISETLKSISSMTIREFPKKDKSSIMHIGLSETGFMRFFQLLRLMADKPHETAIKEVVMAYVGIKLGDKGSPYYIRKESYQDFIYLLFASMGFKVTTRRSIMGSNNISIISIRPRVTKQYIVTTLMKTSCSKNEAEKLITSAFDLLNFMVSVSDFRDYQSYRQYRNYCPRYFYAGSPEGEETIICDSEPISILDRIDTRGIFSAYTINEMMDTDIFSPENKAFKNNLSRFIESGDITGEDIFCAMPYNILDRIITNAGTCTVSIGDMLDNITTQSDCNMTNEITDMINASLKNTISKDNNMLVSQALDSVANHSKQKIGDLRQSSCKMALLFKNLATSIYTIERIFNAKVGDDVKASMLEKYKVFTDISMSLYKDLIAMENLKAMLYIIRRSGCRIDDAQITTDDLVKSYSLIRPKILSMINYYNEMSRGYFEHMKKNLNMTDGDSVSFDDE.

A propeptide spanning residues 616–698 (SPEGEETIIC…ILDRIITNAG (83 aa)) is cleaved from the precursor.

The protein belongs to the orthopxvirus protein OPG136 family. In terms of assembly, interacts with P39/A4. In terms of processing, the precursor is cleaved by OPG083 to give rise to the 62 kDa mature protein during virion maturation. Proteolytic cleavage of major core proteins OPG136, OPG129, and OPG098, which occurs at a late stage of core formation, is required for production of infectious mature virions (MV).

The protein localises to the virion. Core protein 4a is the most abundant virion protein. Major component of the virion core that undergoes proteolytic processing during the immature virion (IV) to mature virion (MV) transition. In Homo sapiens (Human), this protein is Major core protein OPG136 precursor (OPG136).